Consider the following 226-residue polypeptide: Transcriptional regulatory protein CitT (226 aa).

One can recognise a Response regulatory domain in the interval 3-119 (HIAIAEDDFR…KFRQVLLQYK (117 aa)). A 4-aspartylphosphate modification is found at Asp-54. The H-T-H motif DNA-binding region spans 178–197 (AEELGEKMGASRTTARRYAE).

Phosphorylated by CitS.

The protein localises to the cytoplasm. In terms of biological role, member of the two-component regulatory system CitT/CitS. Regulates the expression of the citM-yflN operon. Phosphorylated CitT binds to the citM promoter to activate the transcription of the citM-yflN operon. The sequence is that of Transcriptional regulatory protein CitT (citT) from Bacillus subtilis (strain 168).